Here is a 207-residue protein sequence, read N- to C-terminus: MHQIYSCSDENIEVFTTVIPSKVSSSSRRRVKSSHHLLAKNVVIESDLYPPPRPLELLPQRCERRDTGDRRWLQTGRLQTARPPGAHPTKTPSRPVGISEPKTSNLCGNRAYGKSLIPPVARISVKAPAGAEVAAKGSEHGAVLGRGSRHLKKIAEEYPALPQGAEASLPLTGSTSCGVPGILRKMWTRHKKKSEYVGATNSAFEAD.

A disordered region spans residues 65-104 (RDTGDRRWLQTGRLQTARPPGAHPTKTPSRPVGISEPKTS).

This sequence belongs to the vexin family.

The protein resides in the cell membrane. It localises to the nucleus. Required for neurogenesis in the neural plate and retina. Strongly cooperates with neural bHLH factors to promote neurogenesis. This Mus musculus (Mouse) protein is Vexin.